A 256-amino-acid polypeptide reads, in one-letter code: uncharacterized protein (256 aa).

The next 2 helical transmembrane spans lie at 155-175 and 203-223; these read ITGM…GLWL and ITTT…YLLI.

It is found in the cell membrane. This is an uncharacterized protein from Mycobacterium bovis (strain ATCC BAA-935 / AF2122/97).